The primary structure comprises 129 residues: Large ribosomal subunit protein bL17 (129 aa).

This sequence belongs to the bacterial ribosomal protein bL17 family. As to quaternary structure, part of the 50S ribosomal subunit. Contacts protein L32.

This Actinobacillus succinogenes (strain ATCC 55618 / DSM 22257 / CCUG 43843 / 130Z) protein is Large ribosomal subunit protein bL17.